The following is a 234-amino-acid chain: Peroxisomal coenzyme A diphosphatase ndx-8 (234 aa).

The Nudix hydrolase domain occupies 27–162 (EQDAGVLILL…TFLIDEFYMV (136 aa)). A Nudix box motif is present at residues 66 to 90 (GGMMDDEDGQNVRRTAIREAYEEVG). Mg(2+) contacts are provided by glutamate 84 and glutamate 88. A helical transmembrane segment spans residues 170–190 (YPTTYGVTALMCIVVAIGLLG). The Microbody targeting signal motif lies at 232–234 (SKI).

It belongs to the Nudix hydrolase family. The cofactor is Mg(2+). It depends on Mn(2+) as a cofactor.

It is found in the peroxisome membrane. Functionally, coenzyme A diphosphatase which mediates the cleavage of CoA into 3',5'-ADP and 4'-phosphopantetheine. In Caenorhabditis elegans, this protein is Peroxisomal coenzyme A diphosphatase ndx-8 (ndx-8).